Reading from the N-terminus, the 279-residue chain is tRNA-cytidine(32) 2-sulfurtransferase (279 aa).

Residues 46–51 (SGGKDS) carry the PP-loop motif motif. Cysteine 121, cysteine 124, and cysteine 212 together coordinate [4Fe-4S] cluster.

The protein belongs to the TtcA family. Homodimer. Requires Mg(2+) as cofactor. [4Fe-4S] cluster is required as a cofactor.

It localises to the cytoplasm. It carries out the reaction cytidine(32) in tRNA + S-sulfanyl-L-cysteinyl-[cysteine desulfurase] + AH2 + ATP = 2-thiocytidine(32) in tRNA + L-cysteinyl-[cysteine desulfurase] + A + AMP + diphosphate + H(+). Its pathway is tRNA modification. Its function is as follows. Catalyzes the ATP-dependent 2-thiolation of cytidine in position 32 of tRNA, to form 2-thiocytidine (s(2)C32). The sulfur atoms are provided by the cysteine/cysteine desulfurase (IscS) system. The polypeptide is tRNA-cytidine(32) 2-sulfurtransferase (Marinomonas sp. (strain MWYL1)).